A 309-amino-acid chain; its full sequence is tRNA pseudouridine synthase B (309 aa).

Asp-39 acts as the Nucleophile in catalysis.

The protein belongs to the pseudouridine synthase TruB family. Type 1 subfamily.

The catalysed reaction is uridine(55) in tRNA = pseudouridine(55) in tRNA. Its function is as follows. Responsible for synthesis of pseudouridine from uracil-55 in the psi GC loop of transfer RNAs. The protein is tRNA pseudouridine synthase B of Bacillus velezensis (strain DSM 23117 / BGSC 10A6 / LMG 26770 / FZB42) (Bacillus amyloliquefaciens subsp. plantarum).